Reading from the N-terminus, the 301-residue chain is Protein phosphatase 1 regulatory subunit 3B (301 aa).

Positions 79–82 match the PP1-binding motif motif; the sequence is RVSF. Residues 142 to 250 enclose the CBM21 domain; sequence RNRLQAESVC…SNKGLNYRIV (109 aa).

Interacts with glycogen, PPP1CC catalytic subunit of PP1 and PYGL. Associates with glycogen particles. Forms complexes with debranching enzyme, glycogen phosphorylase, glycogen synthase and phosphorylase kinase which is necessary for its regulation of PP1 activity.

Functionally, acts as a glycogen-targeting subunit for phosphatase PP1. Facilitates interaction of the PP1 with enzymes of the glycogen metabolism and regulates its activity. Suppresses the rate at which PP1 dephosphorylates (inactivates) glycogen phosphorylase and enhances the rate at which it activates glycogen synthase and therefore limits glycogen breakdown. The chain is Protein phosphatase 1 regulatory subunit 3B (ppp1r3b) from Xenopus tropicalis (Western clawed frog).